The chain runs to 264 residues: ATP synthase subunit a (264 aa).

6 helical membrane passes run 29–49 (TWHIDSLLFSVGLGVLFLWLF), 89–109 (VIAPLALTIFVWVFMMNFMDM), 134–154 (DLNITFSMAIGVFLLIIYYSI), 177–197 (IPVNFLLETVTLIAKPISLAL), 208–228 (LIFILIALMYGANMALSALGV), and 235–255 (LIFHILVITLQAFIFMMLTIV).

This sequence belongs to the ATPase A chain family. As to quaternary structure, F-type ATPases have 2 components, CF(1) - the catalytic core - and CF(0) - the membrane proton channel. CF(1) has five subunits: alpha(3), beta(3), gamma(1), delta(1), epsilon(1). CF(0) has three main subunits: a(1), b(2) and c(9-12). The alpha and beta chains form an alternating ring which encloses part of the gamma chain. CF(1) is attached to CF(0) by a central stalk formed by the gamma and epsilon chains, while a peripheral stalk is formed by the delta and b chains.

The protein localises to the cell inner membrane. In terms of biological role, key component of the proton channel; it plays a direct role in the translocation of protons across the membrane. This is ATP synthase subunit a from Shewanella sediminis (strain HAW-EB3).